We begin with the raw amino-acid sequence, 135 residues long: Large ribosomal subunit protein uL16c (135 aa).

This sequence belongs to the universal ribosomal protein uL16 family. As to quaternary structure, part of the 50S ribosomal subunit.

The protein resides in the plastid. The protein localises to the chloroplast. This chain is Large ribosomal subunit protein uL16c, found in Oenothera argillicola (Appalachian evening primrose).